A 182-amino-acid chain; its full sequence is Lipid A acyltransferase PagP (182 aa).

The first 21 residues, 1 to 21, serve as a signal peptide directing secretion; that stretch reads MTQYFRSLAFFLLPVPATAMA. A lipid anchor (N-palmitoyl cysteine) is attached at Cys22. Cys22 is lipidated: S-diacylglycerol cysteine. Active-site residues include His55, Asp98, and Ser99.

Belongs to the lipid A palmitoyltransferase family. As to quaternary structure, homodimer.

It is found in the cell outer membrane. The catalysed reaction is a lipid A + a 1,2-diacyl-sn-glycero-3-phosphocholine = a hepta-acyl lipid A + a 2-acyl-sn-glycero-3-phosphocholine. The enzyme catalyses a lipid IVA + a 1,2-diacyl-sn-glycero-3-phosphocholine = a lipid IVB + a 2-acyl-sn-glycero-3-phosphocholine. It carries out the reaction a lipid IIA + a 1,2-diacyl-sn-glycero-3-phosphocholine = a lipid IIB + a 2-acyl-sn-glycero-3-phosphocholine. Functionally, transfers a fatty acid residue from the sn-1 position of a phospholipid to the N-linked hydroxyfatty acid chain on the proximal unit of lipid A or its precursors. This Bordetella pertussis (strain CS) protein is Lipid A acyltransferase PagP.